The following is a 174-amino-acid chain: Type II restriction enzyme Bsp6I (174 aa).

It catalyses the reaction Endonucleolytic cleavage of DNA to give specific double-stranded fragments with terminal 5'-phosphates.. In terms of biological role, a P subtype restriction enzyme that recognizes the double-stranded sequence 5'-GCNGC-3' and cleaves after C-2. The sequence is that of Type II restriction enzyme Bsp6I from Bacillus sp. (strain RFL6).